A 270-amino-acid chain; its full sequence is Probable septum site-determining protein MinC (270 aa).

The tract at residues 105-129 (DRRAPSSKAADEAPVQQAEPAAPAA) is disordered. Over residues 116–129 (EAPVQQAEPAAPAA) the composition is skewed to low complexity.

This sequence belongs to the MinC family. In terms of assembly, interacts with MinD and FtsZ.

Its function is as follows. Cell division inhibitor that blocks the formation of polar Z ring septums. Rapidly oscillates between the poles of the cell to destabilize FtsZ filaments that have formed before they mature into polar Z rings. Prevents FtsZ polymerization. This Burkholderia mallei (strain NCTC 10247) protein is Probable septum site-determining protein MinC.